The primary structure comprises 599 residues: Protein linkin (599 aa).

The N-terminal stretch at 1-19 (MKKILPIIWLINLVSGSLS) is a signal peptide. Topologically, residues 20 to 553 (LEKKAPDLLG…SRLYVTPSAL (534 aa)) are extracellular. Residues N50, N117, N163, N361, and N378 are each glycosylated (N-linked (GlcNAc...) asparagine). Residues 554 to 574 (IVQSLAVIALVCCMLLMVVVF) form a helical membrane-spanning segment. Topologically, residues 575–599 (LHYREKKEDRYERQQQSHRFHFDAM) are cytoplasmic.

It belongs to the TIP family. Expressed in all somatic gonadal cells including distal tip cells, anchor cell, uterine precursor cells and spermatheca precursor cells of the hermaphrodite. Also expressed in the pharynx, pharyngeal-intestinal valve, intestine, excretory cell and canal, seam cells, a subset of hypodermal cells, vulval precursor cells of the hermaphrodite and hook precursor cells in the male.

It localises to the apical cell membrane. Its subcellular location is the lateral cell membrane. Its function is as follows. Probable cell adhesion protein involved in gonadal cell migration. This is Protein linkin from Caenorhabditis elegans.